We begin with the raw amino-acid sequence, 91 residues long: Small ribosomal subunit protein bS20 (91 aa).

The segment covering 1–18 has biased composition (basic and acidic residues); it reads MPLHKSAEKRLRQSERRN. Positions 1-25 are disordered; that stretch reads MPLHKSAEKRLRQSERRNARNRARK.

This sequence belongs to the bacterial ribosomal protein bS20 family.

Functionally, binds directly to 16S ribosomal RNA. The chain is Small ribosomal subunit protein bS20 from Chlorobium luteolum (strain DSM 273 / BCRC 81028 / 2530) (Pelodictyon luteolum).